The primary structure comprises 103 residues: Insulin (103 aa).

Residues 1–20 (IQSLPLLALLALSGPGTSHA) form the signal peptide. 3 disulfides stabilise this stretch: C27–C89, C39–C102, and C88–C93. The propeptide at 53–80 (DAEHPLVNGPLHGEVGDLPFQQEEFEKV) is c peptide.

This sequence belongs to the insulin family. In terms of assembly, heterodimer of a B chain and an A chain linked by two disulfide bonds.

Its subcellular location is the secreted. Functionally, insulin decreases blood glucose concentration. It increases cell permeability to monosaccharides, amino acids and fatty acids. It accelerates glycolysis, the pentose phosphate cycle, and glycogen synthesis in liver. This chain is Insulin (INS), found in Selasphorus rufus (Rufous hummingbird).